The following is a 204-amino-acid chain: Recombination protein RecR (204 aa).

The C4-type zinc-finger motif lies at 58–75; that stretch reads CTICQNITDVGTDPCAIC. One can recognise a Toprim domain in the interval 83–181; that stretch reads TVICVVESPV…AVTKIARGIP (99 aa).

This sequence belongs to the RecR family.

May play a role in DNA repair. It seems to be involved in an RecBC-independent recombinational process of DNA repair. It may act with RecF and RecO. This Chlorobium chlorochromatii (strain CaD3) protein is Recombination protein RecR.